Here is a 1042-residue protein sequence, read N- to C-terminus: Glutamate dehydrogenase 2 (1042 aa).

Residue Lys-596 is part of the active site. Arg-763 carries the post-translational modification ADP-ribosylarginine; by Legionella Lart1.

It belongs to the Glu/Leu/Phe/Val dehydrogenases family. Homodimer. In terms of processing, (Microbial infection) ADP-ribosylated at Arg-763 by the Legionella pneumophila effector Lart1, which inhibits the glutamate dehydrogenase activity. Amoeba are natural hosts of Legionella, and ADP-ribosylation by Lart1 may promote Legionella parasitism.

It is found in the cytoplasm. It carries out the reaction L-glutamate + NAD(+) + H2O = 2-oxoglutarate + NH4(+) + NADH + H(+). Activity is stimulated by AMP. Its activity is regulated as follows. (Microbial infection) Inhibited by ADP-ribosylation. The chain is Glutamate dehydrogenase 2 (glud2) from Dictyostelium discoideum (Social amoeba).